The sequence spans 154 residues: Sperm microtubule associated protein 1 (154 aa).

The chain is Sperm microtubule associated protein 1 from Homo sapiens (Human).